The chain runs to 77 residues: Acyl carrier protein (77 aa).

In terms of domain architecture, Carrier spans 2 to 77; that stretch reads STVEERVKKI…DAIDYIVAHT (76 aa). Ser37 is subject to O-(pantetheine 4'-phosphoryl)serine.

This sequence belongs to the acyl carrier protein (ACP) family. Post-translationally, 4'-phosphopantetheine is transferred from CoA to a specific serine of apo-ACP by AcpS. This modification is essential for activity because fatty acids are bound in thioester linkage to the sulfhydryl of the prosthetic group.

The protein resides in the cytoplasm. The protein operates within lipid metabolism; fatty acid biosynthesis. Carrier of the growing fatty acid chain in fatty acid biosynthesis. In Marinobacter nauticus (strain ATCC 700491 / DSM 11845 / VT8) (Marinobacter aquaeolei), this protein is Acyl carrier protein.